Consider the following 88-residue polypeptide: MDPPNSLQQGIRFGFHSSSFVENMEGSQDEDNLRLLASAASGSSRDTETPTDHASGSAGGAAGGQSESRPGPSGGGVADLFPELRRLP.

The tract at residues 23–88 (NMEGSQDEDN…DLFPELRRLP (66 aa)) is disordered. Over residues 34–44 (RLLASAASGSS) the composition is skewed to low complexity.

This chain is Early E1B 9 kDa protein, found in Homo sapiens (Human).